We begin with the raw amino-acid sequence, 292 residues long: MHIRFTKMQGAGNDFVVLDETQGRLGLTPAQYRFLADRHFGVGADQILTVRPSPGAGIDFEYVIHNADGGQVEQCGNGARCFARYVRDKGLTAQDTIRVQTMAGVIAPHLTADGRVTVDMGRPELEPARVPFDTTGLAPVSQGSGQKWPLALDGQASEATLLVAVVSMGNPHAVQLVDDVDTAPVAQTGPLIESHPRFPQRVNAGYLQIVNRGEVRLRVYERGAGETLACGTGACAAVVAGIRLGLLDARVQVHTRGGLLTIDWAGGLQDPVFMTGPATTVFEGEIDIPDAL.

3 residues coordinate substrate: Asn13, Gln46, and Asn66. The Proton donor role is filled by Cys75. Residues 76–77, Asn170, Asn203, and 221–222 contribute to the substrate site; these read GN and ER. Cys230 (proton acceptor) is an active-site residue. 231 to 232 is a binding site for substrate; the sequence is GT.

The protein belongs to the diaminopimelate epimerase family. In terms of assembly, homodimer.

The protein localises to the cytoplasm. The enzyme catalyses (2S,6S)-2,6-diaminopimelate = meso-2,6-diaminopimelate. Its pathway is amino-acid biosynthesis; L-lysine biosynthesis via DAP pathway; DL-2,6-diaminopimelate from LL-2,6-diaminopimelate: step 1/1. Its function is as follows. Catalyzes the stereoinversion of LL-2,6-diaminopimelate (L,L-DAP) to meso-diaminopimelate (meso-DAP), a precursor of L-lysine and an essential component of the bacterial peptidoglycan. This Acidovorax ebreus (strain TPSY) (Diaphorobacter sp. (strain TPSY)) protein is Diaminopimelate epimerase.